A 234-amino-acid chain; its full sequence is Small ribosomal subunit protein uS2 (234 aa).

It belongs to the universal ribosomal protein uS2 family.

The protein is Small ribosomal subunit protein uS2 of Prochlorococcus marinus (strain MIT 9515).